The following is a 478-amino-acid chain: tRNA modification GTPase MnmE (478 aa).

(6S)-5-formyl-5,6,7,8-tetrahydrofolate contacts are provided by Arg36, Glu94, and Lys133. One can recognise a TrmE-type G domain in the interval 230–402 (GIHVVLAGRP…LVETLCAKVG (173 aa)). Residue Asn240 coordinates K(+). GTP is bound by residues 240-245 (NAGKSS), 259-265 (TDVAGTT), and 284-287 (DTAG). Mg(2+) is bound at residue Ser244. 3 residues coordinate K(+): Thr259, Val261, and Thr264. Thr265 is a Mg(2+) binding site. Lys478 contributes to the (6S)-5-formyl-5,6,7,8-tetrahydrofolate binding site.

It belongs to the TRAFAC class TrmE-Era-EngA-EngB-Septin-like GTPase superfamily. TrmE GTPase family. As to quaternary structure, homodimer. Heterotetramer of two MnmE and two MnmG subunits. Requires K(+) as cofactor.

It localises to the cytoplasm. In terms of biological role, exhibits a very high intrinsic GTPase hydrolysis rate. Involved in the addition of a carboxymethylaminomethyl (cmnm) group at the wobble position (U34) of certain tRNAs, forming tRNA-cmnm(5)s(2)U34. This Psychrobacter cryohalolentis (strain ATCC BAA-1226 / DSM 17306 / VKM B-2378 / K5) protein is tRNA modification GTPase MnmE.